The following is a 236-amino-acid chain: Phosphoribosylaminoimidazole-succinocarboxamide synthase (236 aa).

The protein belongs to the SAICAR synthetase family.

It catalyses the reaction 5-amino-1-(5-phospho-D-ribosyl)imidazole-4-carboxylate + L-aspartate + ATP = (2S)-2-[5-amino-1-(5-phospho-beta-D-ribosyl)imidazole-4-carboxamido]succinate + ADP + phosphate + 2 H(+). It functions in the pathway purine metabolism; IMP biosynthesis via de novo pathway; 5-amino-1-(5-phospho-D-ribosyl)imidazole-4-carboxamide from 5-amino-1-(5-phospho-D-ribosyl)imidazole-4-carboxylate: step 1/2. The chain is Phosphoribosylaminoimidazole-succinocarboxamide synthase from Chlorobium phaeobacteroides (strain DSM 266 / SMG 266 / 2430).